We begin with the raw amino-acid sequence, 365 residues long: 2-aminoethylphosphonate--pyruvate transaminase (365 aa).

Lys-194 bears the N6-(pyridoxal phosphate)lysine mark.

Belongs to the class-V pyridoxal-phosphate-dependent aminotransferase family. PhnW subfamily. As to quaternary structure, homodimer. Requires pyridoxal 5'-phosphate as cofactor.

The catalysed reaction is (2-aminoethyl)phosphonate + pyruvate = phosphonoacetaldehyde + L-alanine. In terms of biological role, involved in phosphonate degradation. The chain is 2-aminoethylphosphonate--pyruvate transaminase from Bacillus thuringiensis subsp. konkukian (strain 97-27).